We begin with the raw amino-acid sequence, 184 residues long: Homeobox protein LOX10 (184 aa).

2 disordered regions span residues Lys1–His29 and Tyr129–Gly184. Positions Arg76–Lys135 form a DNA-binding region, homeobox. 2 stretches are compositionally biased toward low complexity: residues Asn140–Thr161 and Ser174–Gly184.

It belongs to the NK-2 homeobox family. In terms of tissue distribution, expressed in a segmental pattern in the endoderm and in the cephalic nervous system.

It is found in the nucleus. Its function is as follows. May play a role in patterning the gut. This Helobdella triserialis (Leech) protein is Homeobox protein LOX10 (LOX10).